The primary structure comprises 66 residues: Large ribosomal subunit protein bL35 (66 aa).

Residues 1–16 show a composition bias toward basic residues; it reads MPKQKTHRASAKRFKR. Positions 1–20 are disordered; it reads MPKQKTHRASAKRFKRTGSG.

The protein belongs to the bacterial ribosomal protein bL35 family.

This is Large ribosomal subunit protein bL35 from Streptococcus thermophilus (strain CNRZ 1066).